The primary structure comprises 350 residues: Nicotinate-nucleotide--dimethylbenzimidazole phosphoribosyltransferase (350 aa).

E317 (proton acceptor) is an active-site residue.

Belongs to the CobT family.

It carries out the reaction 5,6-dimethylbenzimidazole + nicotinate beta-D-ribonucleotide = alpha-ribazole 5'-phosphate + nicotinate + H(+). It participates in nucleoside biosynthesis; alpha-ribazole biosynthesis; alpha-ribazole from 5,6-dimethylbenzimidazole: step 1/2. Its function is as follows. Catalyzes the synthesis of alpha-ribazole-5'-phosphate from nicotinate mononucleotide (NAMN) and 5,6-dimethylbenzimidazole (DMB). The sequence is that of Nicotinate-nucleotide--dimethylbenzimidazole phosphoribosyltransferase from Shewanella sp. (strain MR-7).